Here is a 315-residue protein sequence, read N- to C-terminus: NADH-ubiquinone oxidoreductase chain 1 (315 aa).

The next 8 membrane-spanning stretches (helical) occupy residues 6-26 (FILSLIGSLLLIICVLVSVAF), 80-100 (ISPIFSLFLSLFVWMCMPFFV), 107-127 (LGGLFFLCCTSLGVYTVMIAG), 153-173 (LALILLSFVFLIGSYNMMYFF), 177-197 (IYIWFLIILFPMALVWLTISL), 229-249 (LIFMAEYASILFMSMLFCVIF), 253-273 (DVFNLLFYVKLTFISFVFIWA), and 292-312 (CFLSFSLNYLLFFIGFKILLF).

It belongs to the complex I subunit 1 family.

It localises to the mitochondrion inner membrane. The catalysed reaction is a ubiquinone + NADH + 5 H(+)(in) = a ubiquinol + NAD(+) + 4 H(+)(out). Functionally, core subunit of the mitochondrial membrane respiratory chain NADH dehydrogenase (Complex I) that is believed to belong to the minimal assembly required for catalysis. Complex I functions in the transfer of electrons from NADH to the respiratory chain. The immediate electron acceptor for the enzyme is believed to be ubiquinone. The chain is NADH-ubiquinone oxidoreductase chain 1 (mt:ND1) from Drosophila persimilis (Fruit fly).